The following is a 187-amino-acid chain: UPF0301 protein HS_0009 (187 aa).

The protein belongs to the UPF0301 (AlgH) family.

In Histophilus somni (strain 129Pt) (Haemophilus somnus), this protein is UPF0301 protein HS_0009.